Here is a 159-residue protein sequence, read N- to C-terminus: Transmembrane protein 89 (159 aa).

Positions 1–24 (MLHVLASLPLLLLLVTSASTHAWS) are cleaved as a signal peptide. Residues 25-63 (RPLWYQVGLDLQPWGCQPKSVEGCRGGLSCPGYWLGPGA) lie on the Extracellular side of the membrane. A helical membrane pass occupies residues 64 to 86 (SRIYPVAAVMITTTMLMICRKIL). Over 87 to 159 (QGRRRSQATK…QIKGTSTQSG (73 aa)) the chain is Cytoplasmic. Positions 91–110 (RSQATKGEHPQVTTEPCGPW) are disordered.

It localises to the membrane. The sequence is that of Transmembrane protein 89 (TMEM89) from Homo sapiens (Human).